Consider the following 257-residue polypeptide: 5-oxoprolinase subunit A (257 aa).

This sequence belongs to the LamB/PxpA family. In terms of assembly, forms a complex composed of PxpA, PxpB and PxpC.

The enzyme catalyses 5-oxo-L-proline + ATP + 2 H2O = L-glutamate + ADP + phosphate + H(+). In terms of biological role, catalyzes the cleavage of 5-oxoproline to form L-glutamate coupled to the hydrolysis of ATP to ADP and inorganic phosphate. The protein is 5-oxoprolinase subunit A of Natranaerobius thermophilus (strain ATCC BAA-1301 / DSM 18059 / JW/NM-WN-LF).